A 498-amino-acid polypeptide reads, in one-letter code: Cytochrome P450 monooxygenase 110 (498 aa).

The chain crosses the membrane as a helical span at residues 7 to 24 (YVFALLGILATLYFVRWS). N-linked (GlcNAc...) asparagine glycosylation is present at Asn-425. Cys-440 lines the heme pocket.

The protein belongs to the cytochrome P450 family. Heme serves as cofactor.

The protein localises to the membrane. The protein operates within secondary metabolite biosynthesis. Functionally, cytochrome P450 monooxygenase that is able to use dehydroabietic acid and testosterone as substrates for oxidation, suggesting that the natural substrate(s) may be structurally related to steroid compounds. This is Cytochrome P450 monooxygenase 110 from Postia placenta (strain ATCC 44394 / Madison 698-R) (Brown rot fungus).